Consider the following 175-residue polypeptide: Putative lipoprotein LppN (175 aa).

A signal peptide spans 1 to 20; sequence MRLPGRHVLYALSAVTMLAA. The N-palmitoyl cysteine moiety is linked to residue cysteine 21. Cysteine 21 carries S-diacylglycerol cysteine lipidation. The segment at 31–56 is disordered; the sequence is ASTNMNPTNPPATAETATVSPTPAPQ. The segment covering 33 to 48 has biased composition (low complexity); that stretch reads TNMNPTNPPATAETAT. Prevents bacterial uptake by a human macrophage-like cell line regions lie at residues 61 to 80, 101 to 120, and 121 to 140; these read ETWINLQVGDCLADLPPADL, RAPVAVDAAVVSMANRDCAA, and GFAPYTGQSVDTSPYSVAYL.

The protein localises to the cell membrane. Its subcellular location is the cell surface. Functionally, probably involved in bacterial recognition and uptake by its host (human). In Mycobacterium tuberculosis (strain ATCC 25618 / H37Rv), this protein is Putative lipoprotein LppN (lppN).